The sequence spans 65 residues: Large ribosomal subunit protein bL33c (65 aa).

Belongs to the bacterial ribosomal protein bL33 family.

The protein localises to the plastid. It is found in the chloroplast. The sequence is that of Large ribosomal subunit protein bL33c (rpl33) from Porphyra purpurea (Red seaweed).